The sequence spans 238 residues: Ribonuclease PH (238 aa).

Phosphate contacts are provided by residues R86 and 124–126 (GTR).

It belongs to the RNase PH family. In terms of assembly, homohexameric ring arranged as a trimer of dimers.

It carries out the reaction tRNA(n+1) + phosphate = tRNA(n) + a ribonucleoside 5'-diphosphate. In terms of biological role, phosphorolytic 3'-5' exoribonuclease that plays an important role in tRNA 3'-end maturation. Removes nucleotide residues following the 3'-CCA terminus of tRNAs; can also add nucleotides to the ends of RNA molecules by using nucleoside diphosphates as substrates, but this may not be physiologically important. Probably plays a role in initiation of 16S rRNA degradation (leading to ribosome degradation) during starvation. The chain is Ribonuclease PH from Anaeromyxobacter sp. (strain Fw109-5).